Here is a 780-residue protein sequence, read N- to C-terminus: Cullin-5 (780 aa).

Residue S34 is modified to Phosphoserine. Phosphothreonine is present on T210. The 62-residue stretch at 711 to 772 (RILRTQEAII…HKYIRRDESD (62 aa)) folds into the Cullin neddylation domain. Residue K724 forms a Glycyl lysine isopeptide (Lys-Gly) (interchain with G-Cter in NEDD8) linkage.

This sequence belongs to the cullin family. In terms of assembly, component of multiple cullin-5-RING E3 ubiquitin-protein ligase complexes (ECS complexes, also named CRL5 complexes) formed of CUL5, Elongin BC (ELOB and ELOC), RNF7/RBX2 and a variable SOCS box domain-containing protein as substrate-specific recognition component. CUL5-containing ECS complexes specifically contain RNF7/RBX2, and not RBX1, as catalytic subunit. Component of the ECS(ASB2) complex with the substrate recognition component ASB2. Component of the ECS(ASB6) complex with the substrate recognition component ASB6. Component of the ECS(ASB7) complex with the substrate recognition component ASB7. Component of the ECS(ASB9) complex with the substrate recognition component ASB9. Component of the ECS(ASB11) complex with the substrate recognition component ASB11. Component of the ECS(ASB12) complex with the substrate recognition component ASB12. Component of the ECS(LRRC41) complex with the substrate recognition component LRRC41. Component of the ECS(SOCS1) complex with the substrate recognition component SOCS1. Component of the ECS(SOCS2) complex with the substrate recognition component SOCS2. Component of the ECS(WSB1) complex with the substrate recognition subunit WSB1. Component of the ECS(SOCS3) complex with the substrate recognition component SOCS3. Component of the ECS(SOCS7) complex with the substrate recognition component SOCS7. Component of the ECS(SPSB1) complex with the substrate recognition component SPSB1. Component of the ECS(SPSB3) complex with the substrate recognition component SPSB3. Component of the ECS(SPSB2) complex with the substrate recognition component SPSB2. Component of the ECS(SPSB4) complex with the substrate recognition component SPSB4. Component of the ECS(RAB40) complex with the substrate recognition subunit RAB40A, RAB40B or RAB40C. Component of the ECS(KLHDC1) complex with the substrate recognition component KLHDC1. Component of the ECS(PCMTD1) complex with the substrate recognition subunit PCMTD1. May also form complexes containing RBX1 and ELOA or VHL; additional evidence is however required to confirm this result in vivo. Interacts (when neddylated) with ARIH2; leading to activate the E3 ligase activity of ARIH2. Interacts with ERCC6; the interaction is induced by DNA damaging agents or inhibitors of RNA polymerase II elongation. Interacts with ELOA (via the BC-box). Interacts (unneddylated form) with DCUN1D1, DCUN1D2, DCUN1D3, DCUN1D4 and DCUN1D5; these interactions promote the cullin neddylation. Post-translationally, neddylated; which enhances the ubiquitination activity of ECS complexes and prevents binding of the inhibitor CAND1. Deneddylated via its interaction with the COP9 signalosome (CSN).

Its subcellular location is the nucleus. Its pathway is protein modification; protein ubiquitination. Functionally, core component of multiple cullin-5-RING E3 ubiquitin-protein ligase complexes (ECS complexes, also named CRL5 complexes), which mediate the ubiquitination and subsequent proteasomal degradation of target proteins. Acts a scaffold protein that contributes to catalysis through positioning of the substrate and the ubiquitin-conjugating enzyme. The functional specificity of the E3 ubiquitin-protein ligase complex depends on the variable SOCS box-containing substrate recognition component. Acts as a key regulator of neuron positioning during cortex development: component of various SOCS-containing ECS complexes, such as the ECS(SOCS7) complex, that regulate reelin signaling by mediating ubiquitination and degradation of DAB1. ECS(SOCS1) seems to direct ubiquitination of JAK2. The ECS(SOCS2) complex mediates the ubiquitination and subsequent proteasomal degradation of phosphorylated EPOR and GHR. The ECS(SPSB3) complex catalyzes ubiquitination of nuclear CGAS. ECS(KLHDC1) complex is part of the DesCEND (destruction via C-end degrons) pathway and mediates ubiquitination and degradation of truncated SELENOS selenoprotein produced by failed UGA/Sec decoding, which ends with a glycine. The ECS(ASB9) complex mediates ubiquitination and degradation of CKB. As part of some ECS complex, promotes 'Lys-11'-linked ubiquitination and degradation of BTRC. As part of a multisubunit ECS complex, polyubiquitinates monoubiquitinated POLR2A. As part of the ECS(RAB40C) complex, mediates ANKRD28 ubiquitination and degradation, thereby regulating protein phosphatase 6 (PP6) complex activity and focal adhesion assembly during cell migration. As part of the ECS(RAB40A) complex, mediates RHOU 'Lys-48'-linked ubiquitination and degradation, thus inhibiting focal adhesion disassembly during cell migration. As part of the ECS(RAB40B) complex, mediates LIMA1/EPLIN and RAP2 ubiquitination, thereby regulating actin cytoskeleton dynamics and stress fiber formation during cell migration. May form a cell surface vasopressin receptor. In Pongo abelii (Sumatran orangutan), this protein is Cullin-5.